The sequence spans 466 residues: Argininosuccinate lyase (466 aa).

This sequence belongs to the lyase 1 family. Argininosuccinate lyase subfamily.

It is found in the cytoplasm. The enzyme catalyses 2-(N(omega)-L-arginino)succinate = fumarate + L-arginine. It participates in amino-acid biosynthesis; L-arginine biosynthesis; L-arginine from L-ornithine and carbamoyl phosphate: step 3/3. The sequence is that of Argininosuccinate lyase from Syntrophobacter fumaroxidans (strain DSM 10017 / MPOB).